We begin with the raw amino-acid sequence, 748 residues long: Transducin-like enhancer protein 4 (748 aa).

Disordered regions lie at residues 1 to 20 (MIRD…PHQP) and 157 to 332 (LPIK…DPLA). The interval 1–112 (MIRDLSKMYR…SQEQQQLQAQ (112 aa)) is q domain. Residues 113–179 (HLLTWTWSAC…HQRDRDSIKS (67 aa)) are GP domain. The segment covering 158–177 (PIKDEKKHHDNDHQRDRDSI) has biased composition (basic and acidic residues). Over residues 178-189 (KSSSVSPSASFR) the composition is skewed to low complexity. The interval 180-249 (SSVSPSASFR…SPRGSPAHSP (70 aa)) is ccN domain. Serine 183, serine 187, serine 191, and serine 197 each carry phosphoserine. Over residues 190–227 (GSEKHRNSTDYSSESKKQKTEEKEIAARYDSDGEKSDD) the composition is skewed to basic and acidic residues. Position 212 is an N6-acetyllysine (lysine 212). Serine 220 carries the phosphoserine modification. Residue serine 225 is modified to Phosphoserine; by CK2. Serine 240 carries the phosphoserine; by CDK1 modification. Phosphoserine occurs at positions 244 and 248. Residues 248 to 264 (SPRENGLDKTRLLKKDA) show a composition bias toward basic and acidic residues. Positions 250–427 (RENGLDKTRL…PGGKPAYSFH (178 aa)) are SP domain. Lysine 256 carries the N6-acetyllysine modification. The segment covering 265-280 (PISPASVASSSSTPSS) has biased composition (low complexity). Serine 267 is subject to Phosphoserine. Residues 292–303 (TTPVSKSNTPTP) are compositionally biased toward polar residues. Threonine 293 is modified (phosphothreonine). Phosphoserine occurs at positions 296 and 298. A phosphothreonine mark is found at threonine 300, threonine 302, threonine 309, and threonine 315. Serine 394 bears the Phosphoserine mark. WD repeat units follow at residues 460–498 (NHGE…NKSP), 506–545 (NRDN…PRIK), 550–589 (SSAP…LVRQ), 592–631 (GHTD…QLQQ), 633–672 (DFTS…KYQL), 674–713 (LHES…SIFQ), and 715–748 (KESS…EVIY).

The protein belongs to the WD repeat Groucho/TLE family. In terms of assembly, homooligomer and heterooligomer with other family members. Binds PAX5, LEF1, TCF7, TCF7L1 and TCF7L2. Interacts with ZNF703; TLE4 may mediate ZNF703 transcriptional repression. Interacts with SIX3 and SIX6. Interacts with PAX2. Phosphorylated. PAX5 binding increases phosphorylation. In terms of processing, ubiquitinated by XIAP/BIRC4.

Its subcellular location is the nucleus. Functionally, transcriptional corepressor that binds to a number of transcription factors. Inhibits the transcriptional activation mediated by PAX5, and by CTNNB1 and TCF family members in Wnt signaling. The effects of full-length TLE family members may be modulated by association with dominant-negative AES. Essential for the transcriptional repressor activity of SIX3 during retina and lens development and for SIX3 transcriptional auto-repression. Involved in transcriptional repression of GNRHR and enhances MSX1-mediated transcriptional repression of CGA/alpha-GSU. This Rattus norvegicus (Rat) protein is Transducin-like enhancer protein 4 (Tle4).